Here is a 647-residue protein sequence, read N- to C-terminus: Versicolorin B synthase (647 aa).

Positions 1 to 26 (MALSTILTAAAMPVAGLFAFAQQSSA) are cleaved as a signal peptide. Residues 85-86 (TA) and 106-107 (EA) each bind FAD. N117 is a glycosylation site (N-linked (GlcNAc...) asparagine). An FAD-binding site is contributed by 172–175 (GAML). N-linked (GlcNAc...) asparagine glycosylation is found at N222 and N509. FAD is bound by residues A617 and 628-629 (PM).

The protein belongs to the GMC oxidoreductase family. In terms of assembly, homodimer. FAD serves as cofactor.

It is found in the cytoplasm. The protein localises to the cytosol. The catalysed reaction is (2S-3S)-versiconal hemiacetal = versicolorin B + H2O. The enzyme catalyses (S)-5'-oxoaverantin + H(+) = (1'S,5'S)-averufin + H2O. Its pathway is mycotoxin biosynthesis. Functionally, versicolorin B synthase; part of the fragmented gene cluster that mediates the biosynthesis of dothistromin (DOTH), a polyketide toxin very similar in structure to the aflatoxin precursor, versicolorin B. The first step of the pathway is the conversion of acetate to norsolorinic acid (NOR) and requires the fatty acid synthase subunits hexA and hexB, as well as the polyketide synthase pksA. PksA combines a hexanoyl starter unit and 7 malonyl-CoA extender units to synthesize the precursor NOR. The hexanoyl starter unit is provided to the acyl-carrier protein (ACP) domain by the fungal fatty acid synthase hexA/hexB. The second step is the conversion of NOR to averantin (AVN) and requires the norsolorinic acid ketoreductase nor1, which catalyzes the dehydration of norsolorinic acid to form (1'S)-averantin. The cytochrome P450 monooxygenase avnA then catalyzes the hydroxylation of AVN to 5'hydroxyaverantin (HAVN). The next step is performed by adhA that transforms HAVN to averufin (AVF). Averufin might then be converted to hydroxyversicolorone by cypX and avfA. Hydroxyversicolorone is further converted versiconal hemiacetal acetate (VHA) by moxY. VHA is then the substrate for the versiconal hemiacetal acetate esterase est1 to yield versiconal (VAL). Versicolorin B synthase vbsA then converts VAL to versicolorin B (VERB) by closing the bisfuran ring. Then, the activity of the versicolorin B desaturase verB leads to versicolorin A (VERA). DotB, a predicted chloroperoxidase, may perform epoxidation of the A-ring of VERA. Alternatively, a cytochrome P450, such as cypX or avnA could catalyze this step. It is also possible that another, uncharacterized, cytochrome P450 enzyme is responsible for this step. Opening of the epoxide could potentially be achieved by the epoxide hydrolase epoA. However, epoA seems not to be required for DOTH biosynthesis, but other epoxide hydrolases may have the ability to complement this hydrolysis. Alternatively, opening of the epoxide ring could be achieved non-enzymatically. The next step is the deoxygenation of ring A to yield the 5,8-dihydroxyanthraquinone which is most likely catalyzed by the NADPH dehydrogenase encoded by ver1. The last stages of DOTH biosynthesis are proposed to involve hydroxylation of the bisfuran. OrdB and norB might have oxidative roles here. An alternative possibility is that cytochrome P450 monoogenases such as avnA and cypX might perform these steps in addition to previously proposed steps. In Dothistroma septosporum (Red band needle blight fungus), this protein is Versicolorin B synthase.